The sequence spans 355 residues: UDP-N-acetylglucosamine--N-acetylmuramyl-(pentapeptide) pyrophosphoryl-undecaprenol N-acetylglucosamine transferase (355 aa).

UDP-N-acetyl-alpha-D-glucosamine contacts are provided by residues 11–13, Asn120, Arg161, Ser188, and Gln280; that span reads TGG.

Belongs to the glycosyltransferase 28 family. MurG subfamily.

The protein localises to the cell inner membrane. It catalyses the reaction di-trans,octa-cis-undecaprenyl diphospho-N-acetyl-alpha-D-muramoyl-L-alanyl-D-glutamyl-meso-2,6-diaminopimeloyl-D-alanyl-D-alanine + UDP-N-acetyl-alpha-D-glucosamine = di-trans,octa-cis-undecaprenyl diphospho-[N-acetyl-alpha-D-glucosaminyl-(1-&gt;4)]-N-acetyl-alpha-D-muramoyl-L-alanyl-D-glutamyl-meso-2,6-diaminopimeloyl-D-alanyl-D-alanine + UDP + H(+). It participates in cell wall biogenesis; peptidoglycan biosynthesis. In terms of biological role, cell wall formation. Catalyzes the transfer of a GlcNAc subunit on undecaprenyl-pyrophosphoryl-MurNAc-pentapeptide (lipid intermediate I) to form undecaprenyl-pyrophosphoryl-MurNAc-(pentapeptide)GlcNAc (lipid intermediate II). The polypeptide is UDP-N-acetylglucosamine--N-acetylmuramyl-(pentapeptide) pyrophosphoryl-undecaprenol N-acetylglucosamine transferase (Prochlorococcus marinus (strain MIT 9211)).